The following is a 474-amino-acid chain: Cysteine--tRNA ligase (474 aa).

Residue Cys-30 participates in Zn(2+) binding. A 'HIGH' region motif is present at residues 32–42 (PTVYNYAHIGN). Zn(2+)-binding residues include Cys-215, His-240, and Glu-244. A 'KMSKS' region motif is present at residues 272-276 (KMSKS). Lys-275 provides a ligand contact to ATP.

The protein belongs to the class-I aminoacyl-tRNA synthetase family. In terms of assembly, monomer. It depends on Zn(2+) as a cofactor.

It localises to the cytoplasm. The catalysed reaction is tRNA(Cys) + L-cysteine + ATP = L-cysteinyl-tRNA(Cys) + AMP + diphosphate. This is Cysteine--tRNA ligase from Brachyspira hyodysenteriae (strain ATCC 49526 / WA1).